The primary structure comprises 417 residues: UDP-N-acetylglucosamine 1-carboxyvinyltransferase (417 aa).

Residue 22-23 coordinates phosphoenolpyruvate; it reads KN. Arginine 93 lines the UDP-N-acetyl-alpha-D-glucosamine pocket. Catalysis depends on cysteine 117, which acts as the Proton donor. Cysteine 117 bears the 2-(S-cysteinyl)pyruvic acid O-phosphothioketal mark. UDP-N-acetyl-alpha-D-glucosamine-binding positions include 122-126, aspartate 305, and isoleucine 327; that span reads RPVDQ.

This sequence belongs to the EPSP synthase family. MurA subfamily.

Its subcellular location is the cytoplasm. The enzyme catalyses phosphoenolpyruvate + UDP-N-acetyl-alpha-D-glucosamine = UDP-N-acetyl-3-O-(1-carboxyvinyl)-alpha-D-glucosamine + phosphate. It participates in cell wall biogenesis; peptidoglycan biosynthesis. Functionally, cell wall formation. Adds enolpyruvyl to UDP-N-acetylglucosamine. In Nitrosomonas eutropha (strain DSM 101675 / C91 / Nm57), this protein is UDP-N-acetylglucosamine 1-carboxyvinyltransferase.